A 68-amino-acid chain; its full sequence is Probable Sec-independent protein translocase protein TatE (68 aa).

Residues 1-21 traverse the membrane as a helical segment; the sequence is MGEISITKLLVVAALIILVFG. Residues 43–68 form a disordered region; sequence MNEDDDSAKKTTAEEEAPAQKLSHKE.

This sequence belongs to the TatA/E family. TatE subfamily.

Its subcellular location is the cell inner membrane. Part of the twin-arginine translocation (Tat) system that transports large folded proteins containing a characteristic twin-arginine motif in their signal peptide across membranes. TatE shares overlapping functions with TatA. This is Probable Sec-independent protein translocase protein TatE from Klebsiella pneumoniae subsp. pneumoniae (strain ATCC 700721 / MGH 78578).